Consider the following 1112-residue polypeptide: Patronin (microtubule-binding protein) homolog (1112 aa).

The 122-residue stretch at 165–286 folds into the Calponin-homology (CH) domain; sequence IDSVDALLFW…VNAFLADLFV (122 aa). Disordered stretches follow at residues 324-358, 485-504, 542-566, and 788-834; these read AARS…SRMS, EGED…QPSV, MQQQ…PSQL, and NHSE…GSGE. Polar residues-rich tracts occupy residues 345 to 358 and 489 to 504; these read SHSQ…SRMS and GTQS…QPSV. Over residues 542–557 the composition is skewed to low complexity; sequence MQQQMQQQQQQQAQAQ. Residues 802-816 show a composition bias toward basic and acidic residues; the sequence is QNDRDDLSTGRKSDD. Residues 850-914 are a coiled coil; sequence ALIAKTMKRK…YKRKKLEKEL (65 aa). The segment at 916–965 is disordered; it reads AELSARSTGRGHSQPPFIRTKSQMSEVTESSRQNTPRMRGQSSVEQRVSV. Residues 935–951 are compositionally biased toward polar residues; it reads TKSQMSEVTESSRQNTP. The segment covering 956–965 has biased composition (low complexity); sequence QSSVEQRVSV. Residues 972-1109 form the CKK domain; it reads THKLYAKTVT…RIPHSGTPAH (138 aa).

It belongs to the CAMSAP1 family. As to quaternary structure, interacts with dapk-1. As to expression, expressed in larval and adult epidermis, intestine and pharynx. Broadly expressed in the nervous system. Expressed in body wall muscle cells.

It localises to the cell projection. The protein resides in the axon. The protein localises to the dendrite. Its subcellular location is the cell membrane. It is found in the sarcolemma. It localises to the cytoplasm. The protein resides in the cytosol. The protein localises to the cytoskeleton. Its subcellular location is the perikaryon. Functionally, required for microtubule stability and anchorage by binding to the minus ends of microtubules. Acts redundantly with noca-1 to control circumferential microtubule assembly along the body which is necessary for larval development, viability, morphology and integrity of the epidermis. Promotes microtubule stability and polymerization in neurons. Involved in the maintenance of neurite morphology in ALM and PLM neurons. May play a role in synaptic protein localization in the PLM neuron. May act upstream of dlk-1 in neuronal regeneration. Plays a role in postembryonic epidermal tissue integrity and wound healing. The polypeptide is Patronin (microtubule-binding protein) homolog (Caenorhabditis elegans).